The primary structure comprises 193 residues: NADH-quinone oxidoreductase subunit B (193 aa).

4 residues coordinate [4Fe-4S] cluster: Cys72, Cys73, Cys137, and Cys167.

Belongs to the complex I 20 kDa subunit family. NDH-1 is composed of 14 different subunits. Subunits NuoB, C, D, E, F, and G constitute the peripheral sector of the complex. The cofactor is [4Fe-4S] cluster.

The protein resides in the cell inner membrane. It catalyses the reaction a quinone + NADH + 5 H(+)(in) = a quinol + NAD(+) + 4 H(+)(out). In terms of biological role, NDH-1 shuttles electrons from NADH, via FMN and iron-sulfur (Fe-S) centers, to quinones in the respiratory chain. Couples the redox reaction to proton translocation (for every two electrons transferred, four hydrogen ions are translocated across the cytoplasmic membrane), and thus conserves the redox energy in a proton gradient. This Brucella abortus (strain S19) protein is NADH-quinone oxidoreductase subunit B.